A 558-amino-acid polypeptide reads, in one-letter code: MSSEPSTTGTSPRTPRPGAQKSSGAVTKKGDRAAKDKTASTLPPVGEDEPKNPEEYQCTGVLETDFAELCTRSGYVDFPKVVTRPRVQQSSVPSASTSEKPVLDDQRPSASCSQSSLESKYVFFRPTIQVELEQEDSKAVKEIYIRGWKVEDRILGIFSKCLPSLSQLQAINLWKVGLTDKTLTTFIALLPLCSSTLRKVSLEGNPIPEQSFSKLMGLDSTIVHLSLRNNNINDHGAQLLGQALSTLQNSNRTLVSLNLAFNHIGDVGAGYIADGLRLNRSLLWLSLAHNHIQDKGALKLAEVLRPFELTHREVVERRRLLLVKGTQERSRSPSSSRYGDSKAEREKSQTLGISNVTLVDKQEKMQSLKAPKTISKKKEKTGEVVKKEEKLGSGQSPTQGTPKKEDAAKAGKGKVTIPEQKMSKGKATKMGAKEKRSILLESEQLVVEATEMVNPLLEPVEHRDGKVFLPGNKVLLHLNLLRNQITEVGLEGFLTAVQYQVQVSKPKTSPKAPLGLLWLSLAKNCFDPQCPTHVMIQELMLPRDPVKAKAREEEAAAT.

Low complexity predominate over residues 1–18 (MSSEPSTTGTSPRTPRPG). 2 disordered regions span residues 1 to 55 (MSSE…NPEE) and 86 to 112 (RVQQ…SASC). The span at 28–38 (KKGDRAAKDKT) shows a compositional bias: basic and acidic residues. Over residues 86 to 99 (RVQQSSVPSASTSE) the composition is skewed to polar residues. 4 LRR repeats span residues 196-216 (TLRK…SKLM), 221-241 (TIVH…QLLG), 253-274 (TLVS…YIAD), and 281-302 (SLLW…KLAE). The segment at 325 to 415 (GTQERSRSPS…DAAKAGKGKV (91 aa)) is disordered. Composition is skewed to basic and acidic residues over residues 339–348 (GDSKAEREKS) and 380–391 (KTGEVVKKEEKL).

The protein is Leucine-rich repeat-containing protein 71 (Lrrc71) of Mus musculus (Mouse).